The sequence spans 267 residues: PHD finger protein ALFIN-LIKE 7 (267 aa).

The segment at 162-207 is disordered; it reads TKVSNGSSKSNKSNPKPSKQSNSNSKPAKPPQPKDEEDSGPEGTED. A compositionally biased stretch (low complexity) spans 165–188; sequence SNGSSKSNKSNPKPSKQSNSNSKP. Over residues 196-207 the composition is skewed to acidic residues; the sequence is DEEDSGPEGTED. A PHD-type zinc finger spans residues 211 to 263; it reads AYMCGACGETYANGEFWICCDVCEKWFHGKCVRITPAKAEHIKQYKCPGCSSK.

This sequence belongs to the Alfin family. Interacts with H3K4me3 and to a lesser extent with H3K4me2.

The protein resides in the nucleus. In terms of biological role, histone-binding component that specifically recognizes H3 tails trimethylated on 'Lys-4' (H3K4me3), which mark transcription start sites of virtually all active genes. This is PHD finger protein ALFIN-LIKE 7 from Oryza sativa subsp. japonica (Rice).